The sequence spans 83 residues: Sulfur carrier protein TusA (83 aa).

The active-site Cysteine persulfide intermediate is Cys19.

The protein belongs to the sulfur carrier protein TusA family.

The protein resides in the cytoplasm. Sulfur carrier protein which probably makes part of a sulfur-relay system. This is Sulfur carrier protein TusA from Aliivibrio salmonicida (strain LFI1238) (Vibrio salmonicida (strain LFI1238)).